The sequence spans 254 residues: Glucosamine-6-phosphate deaminase (254 aa).

The Proton acceptor; for enolization step role is filled by Asp63. Asn129 functions as the For ring-opening step in the catalytic mechanism. His131 serves as the catalytic Proton acceptor; for ring-opening step. Glu136 functions as the For ring-opening step in the catalytic mechanism.

It belongs to the glucosamine/galactosamine-6-phosphate isomerase family. NagB subfamily.

The enzyme catalyses alpha-D-glucosamine 6-phosphate + H2O = beta-D-fructose 6-phosphate + NH4(+). The protein operates within amino-sugar metabolism; N-acetylneuraminate degradation; D-fructose 6-phosphate from N-acetylneuraminate: step 5/5. Its function is as follows. Catalyzes the reversible isomerization-deamination of glucosamine 6-phosphate (GlcN6P) to form fructose 6-phosphate (Fru6P) and ammonium ion. The polypeptide is Glucosamine-6-phosphate deaminase (Exiguobacterium sp. (strain ATCC BAA-1283 / AT1b)).